The following is a 343-amino-acid chain: Protein RecA (343 aa).

Residue 65–72 (GPESSGKT) participates in ATP binding.

It belongs to the RecA family.

The protein localises to the cytoplasm. Can catalyze the hydrolysis of ATP in the presence of single-stranded DNA, the ATP-dependent uptake of single-stranded DNA by duplex DNA, and the ATP-dependent hybridization of homologous single-stranded DNAs. It interacts with LexA causing its activation and leading to its autocatalytic cleavage. This is Protein RecA from Campylobacter jejuni subsp. jejuni serotype O:6 (strain 81116 / NCTC 11828).